A 214-amino-acid polypeptide reads, in one-letter code: Orotate phosphoribosyltransferase (214 aa).

5-phospho-alpha-D-ribose 1-diphosphate is bound by residues arginine 125, lysine 126, lysine 129, histidine 131, and 151-159 (EDTSTTGNS). The orotate site is built by threonine 155 and arginine 183.

It belongs to the purine/pyrimidine phosphoribosyltransferase family. PyrE subfamily. Homodimer. It depends on Mg(2+) as a cofactor.

It catalyses the reaction orotidine 5'-phosphate + diphosphate = orotate + 5-phospho-alpha-D-ribose 1-diphosphate. It participates in pyrimidine metabolism; UMP biosynthesis via de novo pathway; UMP from orotate: step 1/2. Catalyzes the transfer of a ribosyl phosphate group from 5-phosphoribose 1-diphosphate to orotate, leading to the formation of orotidine monophosphate (OMP). The chain is Orotate phosphoribosyltransferase from Tropheryma whipplei (strain TW08/27) (Whipple's bacillus).